A 175-amino-acid chain; its full sequence is CEN-like protein 4 (175 aa).

The protein belongs to the phosphatidylethanolamine-binding protein family. As to expression, expressed in vegetative axillary meristems but not in the main shoot meristem.

It is found in the cytoplasm. Its function is as follows. May form complexes with phosphorylated ligands by interfering with kinases and their effectors. This is CEN-like protein 4 (CET4) from Nicotiana tabacum (Common tobacco).